Consider the following 344-residue polypeptide: GTP 3',8-cyclase (344 aa).

The Radical SAM core domain occupies 19 to 244; the sequence is PFGRTISYLR…MDLAESTGGP (226 aa). Residue arginine 28 participates in GTP binding. Positions 35 and 39 each coordinate [4Fe-4S] cluster. Tyrosine 41 provides a ligand contact to S-adenosyl-L-methionine. Cysteine 42 is a binding site for [4Fe-4S] cluster. Position 77 (arginine 77) interacts with GTP. Glycine 81 contributes to the S-adenosyl-L-methionine binding site. Threonine 111 contributes to the GTP binding site. S-adenosyl-L-methionine is bound at residue serine 135. Lysine 171 contributes to the GTP binding site. An S-adenosyl-L-methionine-binding site is contributed by methionine 205. [4Fe-4S] cluster is bound by residues cysteine 268 and cysteine 271. 273–275 contacts GTP; sequence RVR. Cysteine 285 provides a ligand contact to [4Fe-4S] cluster.

Belongs to the radical SAM superfamily. MoaA family. As to quaternary structure, monomer and homodimer. Requires [4Fe-4S] cluster as cofactor.

It carries out the reaction GTP + AH2 + S-adenosyl-L-methionine = (8S)-3',8-cyclo-7,8-dihydroguanosine 5'-triphosphate + 5'-deoxyadenosine + L-methionine + A + H(+). The protein operates within cofactor biosynthesis; molybdopterin biosynthesis. Functionally, catalyzes the cyclization of GTP to (8S)-3',8-cyclo-7,8-dihydroguanosine 5'-triphosphate. This chain is GTP 3',8-cyclase, found in Bradyrhizobium diazoefficiens (strain JCM 10833 / BCRC 13528 / IAM 13628 / NBRC 14792 / USDA 110).